Reading from the N-terminus, the 383-residue chain is Smad nuclear-interacting protein 1 (383 aa).

The span at 1–10 shows a compositional bias: basic and acidic residues; that stretch reads MKAGKSERER. Residues 1 to 209 form a disordered region; that stretch reads MKAGKSERER…NRSKEVPVKE (209 aa). S18 is subject to Phosphoserine. Residue K28 forms a Glycyl lysine isopeptide (Lys-Gly) (interchain with G-Cter in SUMO); alternate linkage. K28 participates in a covalent cross-link: Glycyl lysine isopeptide (Lys-Gly) (interchain with G-Cter in SUMO1); alternate. Residue K28 forms a Glycyl lysine isopeptide (Lys-Gly) (interchain with G-Cter in SUMO2); alternate linkage. Residues 28 to 43 show a composition bias toward basic and acidic residues; the sequence is KQERLSPEPVAHRRPD. Residues S33, S48, and S50 each carry the phosphoserine modification. Over residues 44 to 56 the composition is skewed to low complexity; sequence APAASLSPPAAEP. Basic residues predominate over residues 59–90; sequence SGHRGSRARSPAKKKSKSSGRRSKSPRTKRSQ. Position 91 is a phosphoserine (S91). Composition is skewed to basic and acidic residues over residues 99–134 and 143–159; these read VKQE…ERDR and RSSD…DRDS. A Glycyl lysine isopeptide (Lys-Gly) (interchain with G-Cter in SUMO2) cross-link involves residue K100. Residue S145 is modified to Phosphoserine. Residues 153–194 are a coiled coil; sequence QDRDRDSQNLQAQEEERDFHNARRREHRQQNESAGSEAQEVI. A Glycyl lysine isopeptide (Lys-Gly) (interchain with G-Cter in SUMO2) cross-link involves residue K210. In terms of domain architecture, FHA spans 268 to 331; that stretch reads YLLGRHRRIA…NGTFLNNKRI (64 aa). Residues 359–369 show a composition bias toward basic and acidic residues; that stretch reads ESSDTSELDRK. A disordered region spans residues 359-383; the sequence is ESSDTSELDRKEDEDDEEEEMVSDS. Positions 370–383 are enriched in acidic residues; sequence EDEDDEEEEMVSDS. S381 carries the phosphoserine modification.

In terms of assembly, component of activated spliceosome complexes. Binds SMAD4 and CREBBP/EP300. Component of the minor spliceosome, which splices U12-type introns. Binds the SMAD1/OAZ1/PSMB4 complex. Interacts with DROSHA and SMARCA4. Component of the SNARP complex which consists at least of SNIP1, SNW1, THRAP3, BCLAF1 and PNN. In terms of processing, degraded by the proteasome upon binding to the SMAD1/OAZ1/PSMB4 complex.

Its subcellular location is the nucleus. Its function is as follows. Required for pre-mRNA splicing as component of the spliceosome. As a component of the minor spliceosome, involved in the splicing of U12-type introns in pre-mRNAs. Down-regulates NF-kappa-B signaling by competing with RELA for CREBBP/EP300 binding. Involved in the microRNA (miRNA) biogenesis. May be involved in cyclin-D1/CCND1 mRNA stability through the SNARP complex which associates with both the 3'end of the CCND1 gene and its mRNA. In Mus musculus (Mouse), this protein is Smad nuclear-interacting protein 1 (Snip1).